We begin with the raw amino-acid sequence, 1659 residues long: Fatty acid synthase subunit alpha (1659 aa).

The tract at residues 114–139 is disordered; sequence TQAQASGGAGTIAGAGSSTAPVTAPP. In terms of domain architecture, Carrier spans 160–235; sequence AQAFEIVRTL…AALQKTFTGQ (76 aa). Serine 195 carries the O-(pantetheine 4'-phosphoryl)serine modification. Positions 588-826 are ketoreductase (KR) domain; that stretch reads GRSVLITGAG…LCLMFNTMCS (239 aa). One can recognise a Ketosynthase family 3 (KS3) domain in the interval 1030–1575; it reads KQLLHEVLIQ…QKGAQTIVVH (546 aa). Catalysis depends on for beta-ketoacyl synthase activity residues cysteine 1217, histidine 1458, and histidine 1499. A disordered region spans residues 1631–1659; the sequence is ETLLDPTPPQTNVDDRVARSIVQQESAEP.

The protein belongs to the thiolase-like superfamily. Fungal fatty acid synthetase subunit alpha family. [Alpha(6)beta(6)] hexamers of two multifunctional subunits (alpha and beta). Post-translationally, 4'-phosphopantetheine is transferred from CoA to a specific serine of the acyl carrier domain by the C-terminal PPT domain. This modification is essential for activity because fatty acids are bound in thioester linkage to the sulfhydryl of the prosthetic group.

The enzyme catalyses acetyl-CoA + n malonyl-CoA + 2n NADPH + 4n H(+) = a long-chain-acyl-CoA + n CoA + n CO2 + 2n NADP(+).. The catalysed reaction is a fatty acyl-[ACP] + malonyl-[ACP] + H(+) = a 3-oxoacyl-[ACP] + holo-[ACP] + CO2. It carries out the reaction a (3R)-hydroxyacyl-[ACP] + NADP(+) = a 3-oxoacyl-[ACP] + NADPH + H(+). The protein operates within secondary metabolite biosynthesis. Functionally, fatty acid synthase subunit alpha; part of the gene cluster that mediates the biosynthesis of aspercryptins, linear lipopeptides built from six amino acids including 2 highly unusual and nonproteogenic amino acids, 2-amino-octanoic acid (2aoa) and 2-amino-dodecanol (2adol). The core structure of aspercryptins is as follows: Ser/Ala-Thr-Ile/Val-2aoa-Asn-2adol. The first step of aspercryptin biosynthesis is the generation of the fatty acid precursors, octanoic and dodecanoic acids, by the FAS subunits atnF and atnM. The fatty acid precursors are likely transformed into the corresponding alpha-amino fatty acids in three steps. First, they are hydroxylated by the cytochrome P450 monooxygenase atnE, then oxidized to the corresponding alpha-keto acids by the NAD(P)-dependent oxidoreductase atnD, and finally converted to the alpha-amino fatty acids by the PLP-dependent aminotransferases atnH or atnJ. the alpha-amino fatty acids, 2-amino-octanoic and 2-amino-dodecanoic acids, are recognized, activated, and covalently tethered to the NRPS atnA by its fourth and sixth adenylation domains. The second module of atnA is the Thr module and contains an epimerase (E) domain responsible for the epimerization of Thr to D-allo-Thr. Additionally, despite atnA having only one epimerase domain, the first amino acid of aspercryptin A1 is D-Ser, suggesting that serine is either loaded directly as D-Ser on the first module or that the epimerase domain in the threonine module epimerizes both L-Ser and L-Thr. After condensation of the hexapeptide of aspercryptin, the C-terminal reductase (TE) domain might be involved in the reductive release and production of the aldehyde hexapeptide. Further reduction would generate aspercryptins. The variety of aspercryptins produced reflects the flexibility of the atnA NRPS, allowing incorporation of alanine instead of serine, valine for isoleucine, and a C10 fatty amino alcohol instead of the C12 version. AtnB seems to be involved in the selectivity for Ile versus Val by the third module. Moreover, type B, C and D aspercryptins have an additional N-terminal cichorine, acetyl and propionyl group respectively. The polypeptide is Fatty acid synthase subunit alpha (Emericella nidulans (strain FGSC A4 / ATCC 38163 / CBS 112.46 / NRRL 194 / M139) (Aspergillus nidulans)).